Here is a 503-residue protein sequence, read N- to C-terminus: Phenylalanine--tRNA ligase alpha subunit (503 aa).

Serine 2 is subject to N-acetylserine. A contains the major tRNA-Phe binding sites region spans residues 2–173 (SDFQLEILKK…KRKLIAQGKI (172 aa)). L-phenylalanine-binding positions include threonine 333, 374–376 (QVE), and tyrosine 414. A Mg(2+)-binding site is contributed by glutamate 416. Phenylalanine 440 is a binding site for L-phenylalanine.

Belongs to the class-II aminoacyl-tRNA synthetase family. Phe-tRNA synthetase alpha subunit type 2 subfamily. In terms of assembly, tetramer of two alpha and two beta subunits. The cofactor is Mg(2+).

It is found in the cytoplasm. It carries out the reaction tRNA(Phe) + L-phenylalanine + ATP = L-phenylalanyl-tRNA(Phe) + AMP + diphosphate + H(+). This Saccharomyces cerevisiae (strain ATCC 204508 / S288c) (Baker's yeast) protein is Phenylalanine--tRNA ligase alpha subunit (FRS2).